A 1032-amino-acid polypeptide reads, in one-letter code: Connector enhancer of kinase suppressor of ras 2 (1032 aa).

Residues tryptophan 11–leucine 76 form the SAM domain. Serine 12 is subject to Phosphoserine. One can recognise a CRIC domain in the interval asparagine 84–tyrosine 178. A PDZ domain is found at valine 215–proline 297. Positions arginine 324–proline 340 are enriched in low complexity. Residues arginine 324 to glutamine 349 are disordered. In terms of domain architecture, DUF1170 spans threonine 332–leucine 515. 2 positions are modified to phosphoserine: serine 338 and serine 390. The disordered stretch occupies residues glutamate 480 to tyrosine 509. Residues arginine 570–alanine 669 form the PH domain. A disordered region spans residues aspartate 682–arginine 766. Tyrosine 683 carries the phosphotyrosine modification. Residues tyrosine 683 to aspartate 693 are compositionally biased toward acidic residues. 2 positions are modified to phosphoserine: serine 685 and serine 687. The span at aspartate 701–proline 714 shows a compositional bias: pro residues. Residues leucine 730 to serine 740 are compositionally biased toward low complexity. A phosphoserine mark is found at serine 756 and serine 767. A disordered region spans residues aspartate 866–glutamate 900. Positions proline 874–alanine 917 form a coiled coil. Over residues glutamate 875–alanine 888 the composition is skewed to acidic residues. Phosphoserine is present on serine 906.

The protein belongs to the CNKSR family. In terms of assembly, interacts with RAF1, RAB2L and RAL GTPase proteins. Interacts with DLG4 and AIP1. In terms of processing, phosphorylated on tyrosine. In terms of tissue distribution, expressed in neurons and localized in the cell body and neurites.

The protein localises to the cytoplasm. It localises to the membrane. Functionally, may function as an adapter protein or regulator of Ras signaling pathways, in synaptic junctions. This is Connector enhancer of kinase suppressor of ras 2 (Cnksr2) from Rattus norvegicus (Rat).